A 156-amino-acid chain; its full sequence is MSMSSTVIKFRAGVCEYNEDSRLCTPIPVQGEIEIKPNEEEELGFWDFEWRPTEKPVGRELDPISLILIPGETMWVPIKSSKSGRIFALVFSSNERYFFWLQEKNSGNLPLNELSAKDKEIYNKMIGVLNNSSESDEEESNDEKQKAQDVDVSMQD.

Serine 2 carries the N-acetylserine modification. A Pru domain is found at 2-132 (SMSSTVIKFR…NKMIGVLNNS (131 aa)). Residues 128–156 (VLNNSSESDEEESNDEKQKAQDVDVSMQD) are disordered. 3 positions are modified to phosphoserine: serine 133, serine 135, and serine 140.

The protein belongs to the RPN13 family. In terms of assembly, component of the 19S cap proteasome complex composed of at least RPN1, RPN2, RPN3, RPN4, RPN5, RPN6, RPN7, RPN8, RPN9, RPN10, RPN11, RPN12, RPN13, RPT1, RPT2, RPT3, RPT4, RPT5, and RPT6. The 19S subcomplex associates with the 20S proteasome subcomplex to form the functional 26S proteasome.

The protein localises to the cytoplasm. It is found in the nucleus. In terms of biological role, component of the 19S cap proteasome complex which acts as a regulatory subunit of the 26S proteasome, involved in the ATP-dependent degradation of ubiquitinated proteins. In Saccharomyces cerevisiae (strain ATCC 204508 / S288c) (Baker's yeast), this protein is 26S proteasome regulatory subunit RPN13 (RPN13).